The following is a 277-amino-acid chain: Formamidopyrimidine-DNA glycosylase (277 aa).

The Schiff-base intermediate with DNA role is filled by proline 2. Glutamate 3 functions as the Proton donor in the catalytic mechanism. Catalysis depends on lysine 60, which acts as the Proton donor; for beta-elimination activity. Positions 94, 113, and 156 each coordinate DNA. An FPG-type zinc finger spans residues 241–275 (KVYNREGLPCPHCGKPIQRIKVAGRSSYYCSSCQK). Residue arginine 265 is the Proton donor; for delta-elimination activity of the active site.

Belongs to the FPG family. In terms of assembly, monomer. Zn(2+) serves as cofactor.

It catalyses the reaction Hydrolysis of DNA containing ring-opened 7-methylguanine residues, releasing 2,6-diamino-4-hydroxy-5-(N-methyl)formamidopyrimidine.. The catalysed reaction is 2'-deoxyribonucleotide-(2'-deoxyribose 5'-phosphate)-2'-deoxyribonucleotide-DNA = a 3'-end 2'-deoxyribonucleotide-(2,3-dehydro-2,3-deoxyribose 5'-phosphate)-DNA + a 5'-end 5'-phospho-2'-deoxyribonucleoside-DNA + H(+). Involved in base excision repair of DNA damaged by oxidation or by mutagenic agents. Acts as a DNA glycosylase that recognizes and removes damaged bases. Has a preference for oxidized purines, such as 7,8-dihydro-8-oxoguanine (8-oxoG). Has AP (apurinic/apyrimidinic) lyase activity and introduces nicks in the DNA strand. Cleaves the DNA backbone by beta-delta elimination to generate a single-strand break at the site of the removed base with both 3'- and 5'-phosphates. This chain is Formamidopyrimidine-DNA glycosylase, found in Desulforamulus reducens (strain ATCC BAA-1160 / DSM 100696 / MI-1) (Desulfotomaculum reducens).